We begin with the raw amino-acid sequence, 133 residues long: Small ribosomal subunit protein uS8 (133 aa).

It belongs to the universal ribosomal protein uS8 family. As to quaternary structure, part of the 30S ribosomal subunit. Contacts proteins S5 and S12.

One of the primary rRNA binding proteins, it binds directly to 16S rRNA central domain where it helps coordinate assembly of the platform of the 30S subunit. The chain is Small ribosomal subunit protein uS8 from Chlamydia caviae (strain ATCC VR-813 / DSM 19441 / 03DC25 / GPIC) (Chlamydophila caviae).